A 1115-amino-acid polypeptide reads, in one-letter code: PAN2-PAN3 deadenylation complex catalytic subunit PAN2 (1115 aa).

WD repeat units lie at residues 27-66 (NRDK…YTRY), 112-153 (AAFS…GCLD), 155-194 (LLNY…TIKS), 197-236 (AHSA…YDLR), and 295-334 (HPCQ…MGMF). The interval 337–473 (TPEMLAYPDY…IQTYTSINKY (137 aa)) is linker. A USP domain is found at 474–855 (EVPPAYSRLP…TPEIIIYCDA (382 aa)). Residues Cys660, His662, Cys713, and Cys716 each contribute to the Zn(2+) site. An Exonuclease domain is found at 907 to 1079 (VAIDAEFVSL…EDAHTALILY (173 aa)). Residues Asp910, Glu912, Asp1020, and Asp1071 each coordinate a divalent metal cation.

This sequence belongs to the peptidase C19 family. PAN2 subfamily. Forms a heterotrimer with an asymmetric homodimer of the regulatory subunit PAN3 to form the poly(A)-nuclease (PAN) deadenylation complex. A divalent metal cation serves as cofactor.

Its subcellular location is the cytoplasm. It catalyses the reaction Exonucleolytic cleavage of poly(A) to 5'-AMP.. With respect to regulation, positively regulated by the regulatory subunit PAN3. Negatively regulated by PAB1-binding protein PBP1. Inhibited under stress conditions. Inhibition of deadenylation under stress increases mRNA stability, which may be a mechanism to retain the majority of the cytoplasmic pool of mRNAs for later reuse and recovery from stress. Catalytic subunit of the poly(A)-nuclease (PAN) deadenylation complex, one of two cytoplasmic mRNA deadenylases involved in mRNA turnover. PAN specifically shortens poly(A) tails of RNA and the activity is stimulated by poly(A)-binding protein PAB1. PAN deadenylation is followed by rapid degradation of the shortened mRNA tails by the CCR4-NOT complex. Deadenylated mRNAs are then degraded by two alternative mechanisms, namely exosome-mediated 3'-5' exonucleolytic degradation, or deadenylation-dependent mRNA decaping by DCP1-DCP2 and subsequent 5'-3' exonucleolytic degradation by XRN1. May also be involved in post-transcriptional maturation of mRNA poly(A) tails, trimming the tails from their synthesized length to the slightly shorter, apparently messenger-specific length found on newly exported mRNAs. PAN cooperates with protein kinase DUN1 in the regulation of RAD5 mRNA levels and cell survival in response to replicational stress. In Saccharomyces cerevisiae (strain ATCC 204508 / S288c) (Baker's yeast), this protein is PAN2-PAN3 deadenylation complex catalytic subunit PAN2.